The sequence spans 538 residues: NAD(P)H-quinone oxidoreductase chain 4 1 (538 aa).

Transmembrane regions (helical) follow at residues 7 to 27 (FPWLTAIIALPLVAALAIPII), 37 to 57 (WYGLGVAFADFALMIAAFWHY), 88 to 108 (LSMPLLLLTGLINTLAIFAAW), 116 to 136 (LFYGLMLVMYSAQLGVFVAQD), 137 to 157 (LLLFFLMWEIELVPVYLLISI), 170 to 190 (FILYTAAASIFILVAGFALAF), 210 to 230 (AIELLAYAGFLIAFGVKLPIF), 244 to 264 (SAPGSMILAGVLLKMGGYALI), 278 to 298 (FAPVLAILGVVNIVYGACCAF), 315 to 335 (MGFVLIGLASYTEIGVSGAVL), 336 to 356 (QMVSHGLVAASLFFLTGVTYE), 388 to 408 (LALPGMSGFVGELMVFIGIAT), and 418 to 438 (VVVVLLSAVGVILTPIYLLSM).

This sequence belongs to the complex I subunit 4 family.

The protein resides in the cellular thylakoid membrane. It catalyses the reaction a plastoquinone + NADH + (n+1) H(+)(in) = a plastoquinol + NAD(+) + n H(+)(out). The enzyme catalyses a plastoquinone + NADPH + (n+1) H(+)(in) = a plastoquinol + NADP(+) + n H(+)(out). In terms of biological role, NDH-1 shuttles electrons from NAD(P)H, via FMN and iron-sulfur (Fe-S) centers, to quinones in the respiratory chain. The immediate electron acceptor for the enzyme in this species is believed to be plastoquinone. Couples the redox reaction to proton translocation (for every two electrons transferred, four hydrogen ions are translocated across the cytoplasmic membrane), and thus conserves the redox energy in a proton gradient. The sequence is that of NAD(P)H-quinone oxidoreductase chain 4 1 from Nostoc sp. (strain PCC 7120 / SAG 25.82 / UTEX 2576).